Here is a 1247-residue protein sequence, read N- to C-terminus: Structural polyprotein (1247 aa).

Residues 36–67 (RPAGQLAQLISAVSRLALRTVPQKPRRTRKIK) form a host transcription inhibition region. The tract at residues 53–103 (LRTVPQKPRRTRKIKKQKQVKQEQQSTRNQKKKAPKQKQTQKKKRPGRRER) is disordered. Basic residues-rich tracts occupy residues 59-71 (KPRR…KQKQ) and 81-100 (NQKK…RPGR). The Nuclear localization signal signature appears at 60 to 98 (PRRTRKIKKQKQVKQEQQSTRNQKKKAPKQKQTQKKKRP). The interval 83 to 113 (KKKAPKQKQTQKKKRPGRRERMCMKIENDCI) is binding to the viral RNA. The ribosome-binding stretch occupies residues 98 to 112 (PGRRERMCMKIENDC). Cys112 and Cys127 are joined by a disulfide. The Peptidase S3 domain maps to 112–260 (CIFEVKHEGK…KITPEGSVEW (149 aa)). The active-site Charge relay system is the His138. A Nuclear export signal motif is present at residues 143 to 153 (IDNADLAKLAF). The segment at 154-159 (KRSSKY) is interaction with spike glycoprotein E2. Asp160 serves as the catalytic Charge relay system. Residues 182–192 (PEGYYNWHHGA) form a dimerization of the capsid protein region. The active-site Charge relay system is the Ser212. Positions 218 to 222 (DNKGR) are dimerization of the capsid protein. The functions as an uncleaved signal peptide for the precursor of protein E3/E2 stretch occupies residues 261-273 (SLALPVMCLLANT). 9 disulfide bridges follow: Cys268/Cys277, Cys282/Cys286, Cys285/Cys317, Cys343/Cys449, Cys346/Cys352, Cys415/Cys429, Cys477/Cys590, Cys525/Cys549, and Cys527/Cys544. Asn272 is a glycosylation site (N-linked (GlcNAc...) asparagine; by host). Residues 325-691 (NARENFNVYK…YYYELYPTTT (367 aa)) lie on the Extracellular side of the membrane. N-linked (GlcNAc...) asparagine; by host glycosylation is present at Asn587. A helical membrane pass occupies residues 692–712 (IAVLAAASIVVASLVGLSLGM). Residues 713–747 (CICARRRCITPYELTPGATIPFLLGILCCVKTAKA) are Cytoplasmic-facing. The tract at residues 715–719 (CARRR) is interaction with the capsid protein. Residues Cys720, Cys740, and Cys741 are each lipidated (S-palmitoyl cysteine; by host). The interval 720 to 740 (CITPYELTPGATIPFLLGILC) is transient transmembrane before p62-6K protein processing. Cys720 and Cys741 are joined by a disulfide. The Extracellular segment spans residues 748-762 (ASYYEAATYLWNEQQ). A helical membrane pass occupies residues 763 to 783 (PLFWLQLLIPLSAAIVVCNCL). Topologically, residues 784–787 (KLLP) are cytoplasmic. The chain crosses the membrane as a helical span at residues 788–808 (CCCKTLTFLAVMSIGARTVSA). The Extracellular segment spans residues 809-1223 (YEHATVIPNT…AMSWVQKITG (415 aa)). Disulfide bonds link Cys857-Cys922, Cys870-Cys902, Cys871-Cys904, and Cys876-Cys886. The segment at 892-909 (VYPFMWGGAYCFCDAENT) is E1 fusion peptide loop. 2 N-linked (GlcNAc...) asparagine; by host glycosylation sites follow: Asn949 and Asn1078. Intrachain disulfides connect Cys1067–Cys1079, Cys1109–Cys1184, Cys1114–Cys1188, and Cys1136–Cys1178. The chain crosses the membrane as a helical span at residues 1224-1244 (GVGLVVAIAALILIIVLCVSF). The S-palmitoyl cysteine; by host moiety is linked to residue Cys1241. Over 1245 to 1247 (SRH) the chain is Cytoplasmic.

Homodimer. Homomultimer. Interacts with host karyopherin KPNA4; this interaction allows the nuclear import of the viral capsid protein. Interacts with spike glycoprotein E2. Interacts with host IRAK1; the interaction leads to inhibition of IRAK1-dependent signaling. As to quaternary structure, the precursor of protein E3/E2 and E1 form a heterodimer shortly after synthesis. In terms of assembly, the precursor of protein E3/E2 and E1 form a heterodimer shortly after synthesis. Processing of the precursor of protein E3/E2 into E2 and E3 results in a heterodimer of the spike glycoproteins E2 and E1. Spike at virion surface are constituted of three E2-E1 heterodimers. After target cell attachment and endocytosis, E1 change conformation to form homotrimers. Interacts with 6K protein. Interacts with spike glycoprotein E1. Processing of the precursor of protein E3/E2 into E2 and E3 results in a heterodimer of the spike glycoproteins E2 and E1. Spike at virion surface are constituted of a trimer of E2-E1 heterodimers. Interacts with 6K protein. Interacts with host MXRA8; this interaction mediates virus entry. As to quaternary structure, oligomer. Interacts with spike glycoprotein E1. Interacts with spike glycoprotein E2. Post-translationally, structural polyprotein: Specific enzymatic cleavages in vivo yield mature proteins. Capsid protein is auto-cleaved during polyprotein translation, unmasking a signal peptide at the N-terminus of the precursor of E3/E2. The remaining polyprotein is then targeted to the host endoplasmic reticulum, where host signal peptidase cleaves it into pE2, 6K and E1 proteins. pE2 is further processed to mature E3 and E2 by host furin in trans-Golgi vesicle. In terms of processing, palmitoylated via thioester bonds. These palmitoylations may induce disruption of the C-terminus transmembrane. This would result in the reorientation of E2 C-terminus from lumenal to cytoplasmic side. N-glycosylated. Post-translationally, palmitoylated via thioester bonds.

The protein localises to the virion. Its subcellular location is the host cytoplasm. It localises to the host cell membrane. The protein resides in the host nucleus. It is found in the virion membrane. The protein localises to the host Golgi apparatus. Its subcellular location is the host trans-Golgi network. It localises to the host endoplasmic reticulum. It catalyses the reaction Autocatalytic release of the core protein from the N-terminus of the togavirus structural polyprotein by hydrolysis of a -Trp-|-Ser- bond.. Functionally, forms an icosahedral capsid with a T=4 symmetry composed of 240 copies of the capsid protein surrounded by a lipid membrane through which penetrate 80 spikes composed of trimers of E1-E2 heterodimers. The capsid protein binds to the viral RNA genome at a site adjacent to a ribosome binding site for viral genome translation following genome release. Possesses a protease activity that results in its autocatalytic cleavage from the nascent structural protein. Following its self-cleavage, the capsid protein transiently associates with ribosomes, and within several minutes the protein binds to viral RNA and rapidly assembles into icosahedric core particles. The resulting nucleocapsid eventually associates with the cytoplasmic domain of the spike glycoprotein E2 at the cell membrane, leading to budding and formation of mature virions. In case of infection, new virions attach to target cells and after clathrin-mediated endocytosis their membrane fuses with the host endosomal membrane. This leads to the release of the nucleocapsid into the cytoplasm, followed by an uncoating event necessary for the genomic RNA to become accessible. The uncoating might be triggered by the interaction of capsid proteins with ribosomes. Binding of ribosomes would release the genomic RNA since the same region is genomic RNA-binding and ribosome-binding. Specifically inhibits interleukin-1 receptor-associated kinase 1/IRAK1-dependent signaling during viral entry, representing a means by which the alphaviruses may evade innate immune detection and activation prior to viral gene expression. Provides the signal sequence for the translocation of the precursor of protein E3/E2 to the host endoplasmic reticulum. Furin-cleaved E3 remains associated with spike glycoprotein E1 and mediates pH protection of the latter during the transport via the secretory pathway. After virion release from the host cell, the assembly protein E3 is gradually released in the extracellular space. Its function is as follows. Plays a role in viral attachment to target host cell, by binding to the cell receptor MXRA8. Synthesized as a p62 precursor which is processed by furin at the cell membrane just before virion budding, giving rise to E2-E1 heterodimer. The p62-E1 heterodimer is stable, whereas E2-E1 is unstable and dissociate at low pH. p62 is processed at the last step, presumably to avoid E1 fusion activation before its final export to cell surface. E2 C-terminus contains a transitory transmembrane that would be disrupted by palmitoylation, resulting in reorientation of the C-terminal tail from lumenal to cytoplasmic side. This step is critical since E2 C-terminus is involved in budding by interacting with capsid proteins. This release of E2 C-terminus in cytoplasm occurs lately in protein export, and precludes premature assembly of particles at the endoplasmic reticulum membrane. In terms of biological role, acts as a viroporin that participates in virus glycoprotein processing and transport to the plasma membrane, cell permeabilization and budding of viral particles. Disrupts the calcium homeostasis of the cell, probably at the endoplasmic reticulum level. This leads to cytoplasmic calcium elevation. Because of its lipophilic properties, the 6K protein is postulated to influence the selection of lipids that interact with the transmembrane domains of the glycoproteins, which, in turn, affects the deformability of the bilayer required for the extreme curvature that occurs as budding proceeds. Present in low amount in virions, about 3% compared to viral glycoproteins. Functionally, class II viral fusion protein. Fusion activity is inactive as long as E1 is bound to E2 in mature virion. After virus attachment to target cell via host MXRA8 and endocytosis, acidification of the endosome induce dissociation of E1/E2 heterodimer and concomitant trimerization of the E1 subunits. This E1 trimer is fusion active, and promotes release of viral nucleocapsid in cytoplasm after endosome and viral membrane fusion. Efficient fusion requires the presence of cholesterol and sphingolipid in the target membrane. The protein is Structural polyprotein of Anopheles (Human).